A 502-amino-acid chain; its full sequence is Probable glycine dehydrogenase (decarboxylating) subunit 2 (502 aa).

Position 273 is an N6-(pyridoxal phosphate)lysine (Lys273).

Belongs to the GcvP family. C-terminal subunit subfamily. The glycine cleavage system is composed of four proteins: P, T, L and H. In this organism, the P 'protein' is a heterodimer of two subunits. Pyridoxal 5'-phosphate is required as a cofactor.

It catalyses the reaction N(6)-[(R)-lipoyl]-L-lysyl-[glycine-cleavage complex H protein] + glycine + H(+) = N(6)-[(R)-S(8)-aminomethyldihydrolipoyl]-L-lysyl-[glycine-cleavage complex H protein] + CO2. Its function is as follows. The glycine cleavage system catalyzes the degradation of glycine. The P protein binds the alpha-amino group of glycine through its pyridoxal phosphate cofactor; CO(2) is released and the remaining methylamine moiety is then transferred to the lipoamide cofactor of the H protein. In Thermococcus onnurineus (strain NA1), this protein is Probable glycine dehydrogenase (decarboxylating) subunit 2.